Reading from the N-terminus, the 660-residue chain is DNA mismatch repair protein MutL (660 aa).

Residues 341–355 (SFQSDGAPPTQQLSS) show a composition bias toward polar residues. 2 disordered regions span residues 341-362 (SFQS…EKAE) and 378-398 (ALSP…RVER). Positions 385–398 (ELPKSPERSERVER) are enriched in basic and acidic residues.

The protein belongs to the DNA mismatch repair MutL/HexB family.

Its function is as follows. This protein is involved in the repair of mismatches in DNA. It is required for dam-dependent methyl-directed DNA mismatch repair. May act as a 'molecular matchmaker', a protein that promotes the formation of a stable complex between two or more DNA-binding proteins in an ATP-dependent manner without itself being part of a final effector complex. In Heliobacterium modesticaldum (strain ATCC 51547 / Ice1), this protein is DNA mismatch repair protein MutL.